A 221-amino-acid polypeptide reads, in one-letter code: Deoxyribose-phosphate aldolase (221 aa).

Aspartate 90 serves as the catalytic Proton donor/acceptor. Residue lysine 152 is the Schiff-base intermediate with acetaldehyde of the active site. The active-site Proton donor/acceptor is the lysine 181.

It belongs to the DeoC/FbaB aldolase family. DeoC type 1 subfamily.

It localises to the cytoplasm. The catalysed reaction is 2-deoxy-D-ribose 5-phosphate = D-glyceraldehyde 3-phosphate + acetaldehyde. It functions in the pathway carbohydrate degradation; 2-deoxy-D-ribose 1-phosphate degradation; D-glyceraldehyde 3-phosphate and acetaldehyde from 2-deoxy-alpha-D-ribose 1-phosphate: step 2/2. Functionally, catalyzes a reversible aldol reaction between acetaldehyde and D-glyceraldehyde 3-phosphate to generate 2-deoxy-D-ribose 5-phosphate. The sequence is that of Deoxyribose-phosphate aldolase from Exiguobacterium sp. (strain ATCC BAA-1283 / AT1b).